The following is an 815-amino-acid chain: Leucine--tRNA ligase (815 aa).

The 'HIGH' region motif lies at P42 to H52. The short motif at K574–S578 is the 'KMSKS' region element. K577 is an ATP binding site.

This sequence belongs to the class-I aminoacyl-tRNA synthetase family.

The protein localises to the cytoplasm. It catalyses the reaction tRNA(Leu) + L-leucine + ATP = L-leucyl-tRNA(Leu) + AMP + diphosphate. This chain is Leucine--tRNA ligase, found in Alcanivorax borkumensis (strain ATCC 700651 / DSM 11573 / NCIMB 13689 / SK2).